Consider the following 77-residue polypeptide: Small ribosomal subunit protein uS4 (77 aa).

Positions 45-77 (PFGGGRPGRVKRKNQKAAAKKASGGDGDEEDEE) are disordered. Positions 52–63 (GRVKRKNQKAAA) are enriched in basic residues.

Belongs to the universal ribosomal protein uS4 family.

The chain is Small ribosomal subunit protein uS4 (RPS9) from Nicotiana tabacum (Common tobacco).